Reading from the N-terminus, the 732-residue chain is S-adenosyl-L-methionine-dependent tRNA 4-demethylwyosine synthase TYW1 (732 aa).

Positions 79 to 237 (VKIFYGSQTG…DFRAWKTKFI (159 aa)) constitute a Flavodoxin-like domain. Residues 85–89 (SQTGT) and 176–208 (VFGL…HRVM) contribute to the FMN site. Positions 248 to 314 (RKKSCGGHCK…HQSLNSIVDV (67 aa)) are disordered. Positions 259–286 (GKCESHQHGSEEREEGSHEQDELHHRDT) are enriched in basic and acidic residues. A compositionally biased stretch (acidic residues) spans 287 to 301 (EEEEPFESSSEEEFG). Residues 400 to 644 (YGIESHRCME…VDLIPEYEIA (245 aa)) enclose the Radical SAM core domain. The [4Fe-4S] cluster site is built by Cys-416, Cys-420, and Cys-423.

It belongs to the TYW1 family. [4Fe-4S] cluster serves as cofactor.

It catalyses the reaction N(1)-methylguanosine(37) in tRNA(Phe) + pyruvate + S-adenosyl-L-methionine = 4-demethylwyosine(37) in tRNA(Phe) + 5'-deoxyadenosine + L-methionine + CO2 + H2O. It participates in tRNA modification; wybutosine-tRNA(Phe) biosynthesis. Functionally, probable component of the wybutosine biosynthesis pathway. Wybutosine is a hyper modified guanosine with a tricyclic base found at the 3'-position adjacent to the anticodon of eukaryotic phenylalanine tRNA. Catalyzes the condensation of N-methylguanine with 2 carbon atoms from pyruvate to form the tricyclic 4-demethylwyosine, an intermediate in wybutosine biosynthesis. This chain is S-adenosyl-L-methionine-dependent tRNA 4-demethylwyosine synthase TYW1 (TYW1), found in Homo sapiens (Human).